The sequence spans 488 residues: Teichuronic acid biosynthesis protein TuaE (488 aa).

14 helical membrane passes run 7 to 29 (AVHT…GAIH), 35 to 57 (MQMA…ATAF), 64 to 86 (FMAV…AIHL), 91 to 110 (LFLY…FGMV), 122 to 144 (LQVK…SLLW), 154 to 173 (YLAL…MYVQ), 180 to 202 (IVYA…NHIT), 222 to 244 (PTSV…FFYI), 257 to 274 (AIGL…FATG), 279 to 298 (LLGI…PPVL), 303 to 322 (IWLS…SKIY), 354 to 376 (NAWH…SYYL), 397 to 419 (ILAN…LIWV), and 459 to 476 (LFFH…VNVL).

The protein localises to the cell membrane. The protein operates within cell wall biogenesis; teichuronic acid biosynthesis. Its function is as follows. Might be involved in the polymerization of teichuronic acid repeating units after their translocation to the outer surface of the membrane. In Bacillus subtilis (strain 168), this protein is Teichuronic acid biosynthesis protein TuaE (tuaE).